Consider the following 331-residue polypeptide: Tryptophan--tRNA ligase (331 aa).

ATP-binding positions include 10 to 12 (QPS) and 18 to 19 (GN). A 'HIGH' region motif is present at residues 11 to 19 (PSGQLTLGN). Asp133 lines the L-tryptophan pocket. Residues 145 to 147 (GED), Val184, and 193 to 197 (KMSKS) each bind ATP. Residues 193 to 197 (KMSKS) carry the 'KMSKS' region motif.

It belongs to the class-I aminoacyl-tRNA synthetase family. As to quaternary structure, homodimer.

It localises to the cytoplasm. It catalyses the reaction tRNA(Trp) + L-tryptophan + ATP = L-tryptophyl-tRNA(Trp) + AMP + diphosphate + H(+). Functionally, catalyzes the attachment of tryptophan to tRNA(Trp). This chain is Tryptophan--tRNA ligase, found in Listeria monocytogenes serotype 4b (strain F2365).